We begin with the raw amino-acid sequence, 196 residues long: 3-isopropylmalate dehydratase small subunit (196 aa).

Belongs to the LeuD family. LeuD type 1 subfamily. Heterodimer of LeuC and LeuD.

The enzyme catalyses (2R,3S)-3-isopropylmalate = (2S)-2-isopropylmalate. It functions in the pathway amino-acid biosynthesis; L-leucine biosynthesis; L-leucine from 3-methyl-2-oxobutanoate: step 2/4. Catalyzes the isomerization between 2-isopropylmalate and 3-isopropylmalate, via the formation of 2-isopropylmaleate. The chain is 3-isopropylmalate dehydratase small subunit from Streptococcus gordonii (strain Challis / ATCC 35105 / BCRC 15272 / CH1 / DL1 / V288).